Reading from the N-terminus, the 667-residue chain is Long-chain-fatty-acid--CoA ligase ACSBG2 (667 aa).

Positions 1 to 14 are enriched in basic and acidic residues; sequence MTQEKKAEDPDRGM. The tract at residues 1 to 20 is disordered; sequence MTQEKKAEDPDRGMDTTSAA. ATP-binding positions include 227–235, 418–423, Asp-496, Arg-511, and Arg-624; these read TSGTTGSPK and EIYGMT.

Belongs to the ATP-dependent AMP-binding enzyme family. Bubblegum subfamily.

The protein localises to the cytoplasm. Its subcellular location is the membrane. It catalyses the reaction a long-chain fatty acid + ATP + CoA = a long-chain fatty acyl-CoA + AMP + diphosphate. The enzyme catalyses (5Z,8Z,11Z,14Z)-eicosatetraenoate + ATP + CoA = (5Z,8Z,11Z,14Z)-eicosatetraenoyl-CoA + AMP + diphosphate. The catalysed reaction is hexadecanoate + ATP + CoA = hexadecanoyl-CoA + AMP + diphosphate. It carries out the reaction (9Z)-octadecenoate + ATP + CoA = (9Z)-octadecenoyl-CoA + AMP + diphosphate. It catalyses the reaction (9Z,12Z)-octadecadienoate + ATP + CoA = (9Z,12Z)-octadecadienoyl-CoA + AMP + diphosphate. The enzyme catalyses tetracosanoate + ATP + CoA = tetracosanoyl-CoA + AMP + diphosphate. Functionally, catalyzes the conversion of fatty acids such as long chain and very long-chain fatty acids to their active form acyl-CoAs for both synthesis of cellular lipids, and degradation via beta-oxidation. Can activate diverse saturated, monosaturated and polyunsaturated fatty acids. Has increased ability to activate oleic and linoleic acid. May play a role in spermatogenesis. The sequence is that of Long-chain-fatty-acid--CoA ligase ACSBG2 from Rattus norvegicus (Rat).